The sequence spans 80 residues: uncharacterized protein (80 aa).

This is an uncharacterized protein from Synechococcus sp. (strain PCC 6716).